The following is an 88-amino-acid chain: Elongation factor 1-beta (88 aa).

It belongs to the EF-1-beta/EF-1-delta family.

Promotes the exchange of GDP for GTP in EF-1-alpha/GDP, thus allowing the regeneration of EF-1-alpha/GTP that could then be used to form the ternary complex EF-1-alpha/GTP/AAtRNA. The protein is Elongation factor 1-beta of Haloarcula marismortui (strain ATCC 43049 / DSM 3752 / JCM 8966 / VKM B-1809) (Halobacterium marismortui).